Consider the following 33-residue polypeptide: Large ribosomal subunit protein uL24 (33 aa).

It belongs to the universal ribosomal protein uL24 family. Component of the large ribosomal subunit.

It is found in the cytoplasm. Functionally, component of the large ribosomal subunit. The ribosome is a large ribonucleoprotein complex responsible for the synthesis of proteins in the cell. In Xenopus laevis (African clawed frog), this protein is Large ribosomal subunit protein uL24 (rpl26).